We begin with the raw amino-acid sequence, 688 residues long: Glycine--tRNA ligase beta subunit (688 aa).

The protein belongs to the class-II aminoacyl-tRNA synthetase family. Tetramer of two alpha and two beta subunits.

It is found in the cytoplasm. It carries out the reaction tRNA(Gly) + glycine + ATP = glycyl-tRNA(Gly) + AMP + diphosphate. In Histophilus somni (strain 129Pt) (Haemophilus somnus), this protein is Glycine--tRNA ligase beta subunit.